The following is a 1639-amino-acid chain: Peroxide stress-activated histidine kinase mak1 (1639 aa).

A compositionally biased stretch (polar residues) spans 38 to 49 (SFTNSQNSSVGS). The tract at residues 38–76 (SFTNSQNSSVGSVHSPILESPTSLNRQHRNSFSFNNVSS) is disordered. The span at 67-76 (NSFSFNNVSS) shows a compositional bias: low complexity. In terms of domain architecture, PAS 1 spans 716–786 (PFPLLKVIID…NDWKSSLFSG (71 aa)). Positions 789-841 (FYHEIRLQRFDNVYRYFICRAVPLRDCTGSVLHFFGTMTDVHDQKLAERELQK) constitute a PAC 1 domain. Positions 848–920 (NENSYRSLAE…ESLEGTFNNQ (73 aa)) constitute a PAS 2 domain. Positions 929 to 982 (FAAEIRFRSTDGHYRWHLVKSVCVNNSADTSTNLWLGTCTDIHDHKMLEEKLQE) constitute a PAC 2 domain. One can recognise a Histidine kinase domain in the interval 1000-1223 (NMSHEIRTPL…RFMWTATFTM (224 aa)). A Phosphohistidine; by autocatalysis modification is found at His1003. The Response regulatory domain occupies 1507-1629 (SVLLAEDNII…HLSLIISGIL (123 aa)). Residue Asp1559 is modified to 4-aspartylphosphate.

The protein localises to the cytoplasm. It catalyses the reaction ATP + protein L-histidine = ADP + protein N-phospho-L-histidine.. In terms of biological role, involved in the control of the SAPK-dependent transcriptional response to peroxide stress. Also has a role in G2/M regulation. The sequence is that of Peroxide stress-activated histidine kinase mak1 (mak1) from Schizosaccharomyces pombe (strain 972 / ATCC 24843) (Fission yeast).